The following is a 398-amino-acid chain: tRNA-specific 2-thiouridylase MnmA (398 aa).

Residues 20–27 (AMSGGVDS) and Leu-46 contribute to the ATP site. The active-site Nucleophile is Cys-114. A disulfide bond links Cys-114 and Cys-210. Residue Gly-138 participates in ATP binding. Positions 160 to 162 (RDQ) are interaction with tRNA. Cys-210 (cysteine persulfide intermediate) is an active-site residue.

Belongs to the MnmA/TRMU family.

The protein resides in the cytoplasm. It catalyses the reaction S-sulfanyl-L-cysteinyl-[protein] + uridine(34) in tRNA + AH2 + ATP = 2-thiouridine(34) in tRNA + L-cysteinyl-[protein] + A + AMP + diphosphate + H(+). Catalyzes the 2-thiolation of uridine at the wobble position (U34) of tRNA, leading to the formation of s(2)U34. The polypeptide is tRNA-specific 2-thiouridylase MnmA (Brucella suis (strain ATCC 23445 / NCTC 10510)).